A 346-amino-acid polypeptide reads, in one-letter code: MGLAAPKNKRKLGNDPNNTRWSRNTENFGHRMLRSQGWEPGQYLGPQDASHAVYHTAASASHIKVALKEDNLGLGAKMNRGDECTGLNAFKEMLARLNGKSEAAIEKDKKAREAHAMNVYVERKFGTMRFVSGGFLVGDVIQEKKEDAEAESTDGTPEPAEATVKKEKKRKAGRDDDDEAQSKEERRRAKKQKKSMKETGSGGDDVTSEEDSAKSKSKKSHKSKKEKKRRKEEPASDEQESEDEESREKRRKKEKKERKERRREKREKKLKKKQQREEDSSSSEANSDDETTGVDTGASTPVASGTSTPVSQVSVRHLARRRFIAQKRMAMKDQQALNQIFMIKSS.

Disordered regions lie at residues 1–27 and 146–315; these read MGLA…NTEN and EDAE…QVSV. A compositionally biased stretch (polar residues) spans 15 to 27; the sequence is DPNNTRWSRNTEN. One can recognise a G-patch domain in the interval 25 to 79; sequence TENFGHRMLRSQGWEPGQYLGPQDASHAVYHTAASASHIKVALKEDNLGLGAKMN. The span at 215–230 shows a compositional bias: basic residues; that stretch reads SKSKKSHKSKKEKKRR. The segment covering 235–245 has biased composition (acidic residues); it reads ASDEQESEDEE. Over residues 249–274 the composition is skewed to basic residues; that stretch reads KRRKKEKKERKERRREKREKKLKKKQ. The span at 293 to 314 shows a compositional bias: polar residues; that stretch reads GVDTGASTPVASGTSTPVSQVS.

This sequence belongs to the PINX1 family.

The protein resides in the nucleus. It localises to the nucleolus. Functionally, involved in rRNA-processing at A0, A1 and A2 sites and negatively regulates telomerase. In Pyricularia oryzae (strain 70-15 / ATCC MYA-4617 / FGSC 8958) (Rice blast fungus), this protein is Protein PXR1 (PXR1).